The chain runs to 203 residues: Ponticulin-like protein H (203 aa).

The first 20 residues, 1–20 (MKLLNSLVLLAALCAITANG), serve as a signal peptide directing secretion. An N-linked (GlcNAc...) asparagine glycan is attached at N58. Positions 127–168 (SDSTNPTSTPSTTPSATPTVTPSTTPTVTPTVTPSTTPTVAP) are enriched in low complexity. A disordered region spans residues 127 to 183 (SDSTNPTSTPSTTPSATPTVTPSTTPTVTPTVTPSTTPTVAPTVPPTTPPSTTTGSG). S182 carries the GPI-like-anchor amidated serine lipid modification. A propeptide spans 183–203 (GSTVVASFGLIVSILLASLAL) (removed in mature form).

This sequence belongs to the ponticulin family. The GPI-like-anchor contains a phosphoceramide group, rather than a phosphatidyl group.

The protein localises to the cell membrane. Functionally, binds F-actin and nucleates actin assembly. The polypeptide is Ponticulin-like protein H (ponH) (Dictyostelium discoideum (Social amoeba)).